The following is a 411-amino-acid chain: 1-deoxy-D-xylulose 5-phosphate reductoisomerase (411 aa).

The NADPH site is built by Thr23, Gly24, Ser25, Ile26, Gly49, Arg50, Asn51, and Asn137. Lys138 is a binding site for 1-deoxy-D-xylulose 5-phosphate. Glu139 contributes to the NADPH binding site. A Mn(2+)-binding site is contributed by Asp163. Positions 164, 165, 199, and 222 each coordinate 1-deoxy-D-xylulose 5-phosphate. Glu165 contacts Mn(2+). NADPH is bound at residue Gly228. Ser235, Asn240, Lys241, and Glu244 together coordinate 1-deoxy-D-xylulose 5-phosphate. Glu244 serves as a coordination point for Mn(2+).

Belongs to the DXR family. Mg(2+) is required as a cofactor. Requires Mn(2+) as cofactor.

It carries out the reaction 2-C-methyl-D-erythritol 4-phosphate + NADP(+) = 1-deoxy-D-xylulose 5-phosphate + NADPH + H(+). Its pathway is isoprenoid biosynthesis; isopentenyl diphosphate biosynthesis via DXP pathway; isopentenyl diphosphate from 1-deoxy-D-xylulose 5-phosphate: step 1/6. Functionally, catalyzes the NADPH-dependent rearrangement and reduction of 1-deoxy-D-xylulose-5-phosphate (DXP) to 2-C-methyl-D-erythritol 4-phosphate (MEP). The chain is 1-deoxy-D-xylulose 5-phosphate reductoisomerase from Mannheimia succiniciproducens (strain KCTC 0769BP / MBEL55E).